A 170-amino-acid chain; its full sequence is Small ribosomal subunit protein uS15 (170 aa).

Over residues 1-10 (MARMHSRKKG) the composition is skewed to basic residues. The tract at residues 1-20 (MARMHSRKKGSSGSRPPVVD) is disordered.

It belongs to the universal ribosomal protein uS15 family. Part of the 30S ribosomal subunit.

This chain is Small ribosomal subunit protein uS15, found in Methanothrix thermoacetophila (strain DSM 6194 / JCM 14653 / NBRC 101360 / PT) (Methanosaeta thermophila).